A 232-amino-acid chain; its full sequence is MSEVVTVKQTNMENIYECEFNDGSFRLCTRNLVSGFNVYGERLIKYEGVEYREWNAFRSKLAGAILKGLKTNPIRKGTKVLYLGAASGTTISHVSDIIELNGKAYGVEFSPRVVRELLLVAQRRPNIFPLLADARFPQSYKSVVENVDVLYVDIAQPDQTDIAIYNARFFLKVNGYMLLVIKARSIDVTKDPKEIYKAEVEKLENSNFETIQIINLDPYDKDHAIVLSRYKG.

Residues 89-90 (TT), 108-109 (EF), 133-134 (DA), and 153-156 (DIAQ) each bind S-adenosyl-L-methionine.

The protein belongs to the methyltransferase superfamily. Fibrillarin family. As to quaternary structure, interacts with nop5. Component of box C/D small ribonucleoprotein (sRNP) particles that contain rpl7ae, FlpA and nop5, plus a guide RNA.

Its function is as follows. Involved in pre-rRNA and tRNA processing. Utilizes the methyl donor S-adenosyl-L-methionine to catalyze the site-specific 2'-hydroxyl methylation of ribose moieties in rRNA and tRNA. Site specificity is provided by a guide RNA that base pairs with the substrate. Methylation occurs at a characteristic distance from the sequence involved in base pairing with the guide RNA. The chain is Fibrillarin-like rRNA/tRNA 2'-O-methyltransferase from Saccharolobus islandicus (strain L.S.2.15 / Lassen #1) (Sulfolobus islandicus).